A 199-amino-acid polypeptide reads, in one-letter code: Thymidine kinase (199 aa).

Residues glycine 15–serine 22 and aspartate 88–glutamine 91 contribute to the ATP site. Glutamate 89 (proton acceptor) is an active-site residue. Zn(2+) is bound by residues cysteine 145, cysteine 148, cysteine 183, and histidine 186.

This sequence belongs to the thymidine kinase family. In terms of assembly, homotetramer.

The protein localises to the cytoplasm. The catalysed reaction is thymidine + ATP = dTMP + ADP + H(+). The protein is Thymidine kinase of Staphylococcus epidermidis (strain ATCC 12228 / FDA PCI 1200).